The primary structure comprises 279 residues: Phosphate import ATP-binding protein PstB 1 (279 aa).

An ABC transporter domain is found at 26–274; that stretch reads VMDCKLDKIF…PREQLTSDYI (249 aa). 59–66 is a binding site for ATP; that stretch reads GPSGCGKS.

Belongs to the ABC transporter superfamily. Phosphate importer (TC 3.A.1.7) family. As to quaternary structure, the complex is composed of two ATP-binding proteins (PstB), two transmembrane proteins (PstC and PstA) and a solute-binding protein (PstS).

Its subcellular location is the cell inner membrane. The enzyme catalyses phosphate(out) + ATP + H2O = ADP + 2 phosphate(in) + H(+). Functionally, part of the ABC transporter complex PstSACB involved in phosphate import. Responsible for energy coupling to the transport system. The protein is Phosphate import ATP-binding protein PstB 1 of Pseudomonas putida (strain ATCC 47054 / DSM 6125 / CFBP 8728 / NCIMB 11950 / KT2440).